Here is a 189-residue protein sequence, read N- to C-terminus: Large ribosomal subunit protein bL9 (189 aa).

This sequence belongs to the bacterial ribosomal protein bL9 family.

In terms of biological role, binds to the 23S rRNA. The protein is Large ribosomal subunit protein bL9 of Cereibacter sphaeroides (strain ATCC 17025 / ATH 2.4.3) (Rhodobacter sphaeroides).